A 114-amino-acid polypeptide reads, in one-letter code: Large ribosomal subunit protein bL20 (114 aa).

Belongs to the bacterial ribosomal protein bL20 family.

Binds directly to 23S ribosomal RNA and is necessary for the in vitro assembly process of the 50S ribosomal subunit. It is not involved in the protein synthesizing functions of that subunit. In Parabacteroides distasonis (strain ATCC 8503 / DSM 20701 / CIP 104284 / JCM 5825 / NCTC 11152), this protein is Large ribosomal subunit protein bL20.